The following is a 122-amino-acid chain: Large ribosomal subunit protein uL14c (122 aa).

Belongs to the universal ribosomal protein uL14 family. As to quaternary structure, part of the 50S ribosomal subunit.

The protein localises to the plastid. Functionally, binds to 23S rRNA. This is Large ribosomal subunit protein uL14c from Euglena longa (Euglenophycean alga).